The sequence spans 271 residues: Formamidopyrimidine-DNA glycosylase (271 aa).

P2 acts as the Schiff-base intermediate with DNA in catalysis. Residue E3 is the Proton donor of the active site. Catalysis depends on K58, which acts as the Proton donor; for beta-elimination activity. 3 residues coordinate DNA: H92, R111, and R152. The FPG-type zinc-finger motif lies at F237 to G271. R261 serves as the catalytic Proton donor; for delta-elimination activity.

Belongs to the FPG family. As to quaternary structure, monomer. It depends on Zn(2+) as a cofactor.

It catalyses the reaction Hydrolysis of DNA containing ring-opened 7-methylguanine residues, releasing 2,6-diamino-4-hydroxy-5-(N-methyl)formamidopyrimidine.. The catalysed reaction is 2'-deoxyribonucleotide-(2'-deoxyribose 5'-phosphate)-2'-deoxyribonucleotide-DNA = a 3'-end 2'-deoxyribonucleotide-(2,3-dehydro-2,3-deoxyribose 5'-phosphate)-DNA + a 5'-end 5'-phospho-2'-deoxyribonucleoside-DNA + H(+). Its function is as follows. Involved in base excision repair of DNA damaged by oxidation or by mutagenic agents. Acts as a DNA glycosylase that recognizes and removes damaged bases. Has a preference for oxidized purines, such as 7,8-dihydro-8-oxoguanine (8-oxoG). Has AP (apurinic/apyrimidinic) lyase activity and introduces nicks in the DNA strand. Cleaves the DNA backbone by beta-delta elimination to generate a single-strand break at the site of the removed base with both 3'- and 5'-phosphates. This chain is Formamidopyrimidine-DNA glycosylase (mutM1), found in Xylella fastidiosa (strain 9a5c).